The chain runs to 219 residues: Guanylate kinase (219 aa).

The region spanning 15 to 194 (GLMFVLSSPS…AFAEVHSILK (180 aa)) is the Guanylate kinase-like domain. An ATP-binding site is contributed by 22-29 (SPSGAGKT).

It belongs to the guanylate kinase family.

It localises to the cytoplasm. It catalyses the reaction GMP + ATP = GDP + ADP. Functionally, essential for recycling GMP and indirectly, cGMP. The chain is Guanylate kinase from Rhodopseudomonas palustris (strain BisB18).